The primary structure comprises 308 residues: Aspartate carbamoyltransferase catalytic subunit (308 aa).

The carbamoyl phosphate site is built by Arg57 and Thr58. L-aspartate is bound at residue Lys86. Arg107, His135, and Gln138 together coordinate carbamoyl phosphate. Positions 167 and 228 each coordinate L-aspartate. Positions 267 and 268 each coordinate carbamoyl phosphate.

The protein belongs to the aspartate/ornithine carbamoyltransferase superfamily. ATCase family. In terms of assembly, heterooligomer of catalytic and regulatory chains.

It catalyses the reaction carbamoyl phosphate + L-aspartate = N-carbamoyl-L-aspartate + phosphate + H(+). The protein operates within pyrimidine metabolism; UMP biosynthesis via de novo pathway; (S)-dihydroorotate from bicarbonate: step 2/3. Its function is as follows. Catalyzes the condensation of carbamoyl phosphate and aspartate to form carbamoyl aspartate and inorganic phosphate, the committed step in the de novo pyrimidine nucleotide biosynthesis pathway. The protein is Aspartate carbamoyltransferase catalytic subunit of Methanococcoides burtonii (strain DSM 6242 / NBRC 107633 / OCM 468 / ACE-M).